Here is a 957-residue protein sequence, read N- to C-terminus: Glycine dehydrogenase (decarboxylating) (957 aa).

Residue Lys708 is modified to N6-(pyridoxal phosphate)lysine.

Belongs to the GcvP family. In terms of assembly, the glycine cleavage system is composed of four proteins: P, T, L and H. Pyridoxal 5'-phosphate serves as cofactor.

It carries out the reaction N(6)-[(R)-lipoyl]-L-lysyl-[glycine-cleavage complex H protein] + glycine + H(+) = N(6)-[(R)-S(8)-aminomethyldihydrolipoyl]-L-lysyl-[glycine-cleavage complex H protein] + CO2. In terms of biological role, the glycine cleavage system catalyzes the degradation of glycine. The P protein binds the alpha-amino group of glycine through its pyridoxal phosphate cofactor; CO(2) is released and the remaining methylamine moiety is then transferred to the lipoamide cofactor of the H protein. The protein is Glycine dehydrogenase (decarboxylating) of Salmonella paratyphi B (strain ATCC BAA-1250 / SPB7).